Here is a 140-residue protein sequence, read N- to C-terminus: Putative nickel-responsive regulator 2 (140 aa).

Positions 81, 92, 94, and 100 each coordinate Ni(2+).

Belongs to the transcriptional regulatory CopG/NikR family. Ni(2+) serves as cofactor.

In terms of biological role, transcriptional regulator. This Methanosarcina mazei (strain ATCC BAA-159 / DSM 3647 / Goe1 / Go1 / JCM 11833 / OCM 88) (Methanosarcina frisia) protein is Putative nickel-responsive regulator 2.